The chain runs to 72 residues: Translation initiation factor IF-1 (72 aa).

The S1-like domain occupies 1 to 72; the sequence is MSKEEVLEFS…TKGRITYRYK (72 aa).

Belongs to the IF-1 family. Component of the 30S ribosomal translation pre-initiation complex which assembles on the 30S ribosome in the order IF-2 and IF-3, IF-1 and N-formylmethionyl-tRNA(fMet); mRNA recruitment can occur at any time during PIC assembly.

It is found in the cytoplasm. Its function is as follows. One of the essential components for the initiation of protein synthesis. Stabilizes the binding of IF-2 and IF-3 on the 30S subunit to which N-formylmethionyl-tRNA(fMet) subsequently binds. Helps modulate mRNA selection, yielding the 30S pre-initiation complex (PIC). Upon addition of the 50S ribosomal subunit IF-1, IF-2 and IF-3 are released leaving the mature 70S translation initiation complex. This chain is Translation initiation factor IF-1, found in Bartonella bacilliformis (strain ATCC 35685 / KC583 / Herrer 020/F12,63).